The sequence spans 198 residues: Mitrocomin (198 aa).

A propeptide spanning residues 1–8 (MSMGSRYA) is cleaved from the precursor. 3 consecutive EF-hand domains span residues 19-54 (KWIA…IICK), 118-147 (DALF…AGIQ), and 148-183 (QSRG…FWYS). Ca(2+) contacts are provided by Asp32, Asn34, Asn36, Gln38, Glu43, Asp125, Asp127, Asn129, Ser131, Glu136, Asp161, Asp163, Asp165, Lys167, and Glu172.

This sequence belongs to the aequorin family.

Its function is as follows. Ca(2+)-dependent bioluminescence photoprotein. Displays an emission peak at 470 nm (blue light). Trace amounts of calcium ion trigger the intramolecular oxidation of the chromophore, coelenterazine into coelenteramide and CO(2) with the concomitant emission of light. The chain is Mitrocomin (MI17) from Mitrocoma cellularia (Cross jellyfish).